Reading from the N-terminus, the 219-residue chain is Glutathione S-transferase U19 (219 aa).

The GST N-terminal domain occupies 3 to 82 (NEVILLDFWP…YIDEVWSHKN (80 aa)). Residues 13-14 (SM), 39-40 (NK), 53-54 (KI), and 66-67 (ES) contribute to the glutathione site. Residues 88–208 (DPYLRAQARF…LPDPEKVTEF (121 aa)) enclose the GST C-terminal domain. Ser198 is modified (phosphoserine).

This sequence belongs to the GST superfamily. Tau family.

The protein localises to the cytoplasm. The protein resides in the cytosol. It carries out the reaction RX + glutathione = an S-substituted glutathione + a halide anion + H(+). Functionally, catalyzes the glutathionylation of 12-oxophytodienoate (OPDA). In vitro, possesses glutathione S-transferase activity toward 1-chloro-2,4-dinitrobenzene (CDNB) and benzyl isothiocyanate (BITC), and glutathione peroxidase activity toward cumene hydroperoxide. This Arabidopsis thaliana (Mouse-ear cress) protein is Glutathione S-transferase U19 (GSTU19).